Consider the following 488-residue polypeptide: Histamine H1 receptor (488 aa).

At 1–29 the chain is on the extracellular side; sequence MSLPNTSSASEDKMCEGNRTAMASPQLLP. 2 N-linked (GlcNAc...) asparagine glycosylation sites follow: Asn-5 and Asn-18. The chain crosses the membrane as a helical span at residues 30-50; it reads LVVVLSSISLVTVGLNLLVLY. Over 51–64 the chain is Cytoplasmic; sequence AVRSERKLHTVGNL. The chain crosses the membrane as a helical span at residues 65–89; the sequence is YIVSLSVADLIVGAVVMPMNILYLI. Over 90-97 the chain is Extracellular; the sequence is MTKWSLGR. The chain crosses the membrane as a helical span at residues 98–123; that stretch reads PLCLFWLSMDYVASTASIFSVFILCI. Residues Cys-100 and Cys-180 are joined by a disulfide bond. 2 residues coordinate histamine: Asp-107 and Thr-112. The tract at residues 107 to 112 is important for agonist binding; it reads DYVAST. At 124-144 the chain is on the cytoplasmic side; the sequence is DRYRSVQQPLRYLRYRTKTRA. Phosphothreonine is present on residues Thr-140 and Thr-142. A helical membrane pass occupies residues 145-164; that stretch reads SATILGAWFLSFLWVIPILG. Over 165 to 188 the chain is Extracellular; that stretch reads WHHFTPLAPELREDKCETDFYNVT. Residues 189-211 traverse the membrane as a helical segment; it reads WFKIMTAIINFYLPTLLMLWFYV. Asn-198 is a histamine binding site. Topologically, residues 212 to 417 are cytoplasmic; that stretch reads KIYKAVRRHC…LNRERKAAKQ (206 aa). Ser-230 carries the phosphoserine modification. The segment at 245 to 337 is disordered; the sequence is KEGAKKPGKE…SQPKMDEQSL (93 aa). Residues 322-337 show a composition bias toward polar residues; sequence ANDQTLSQPKMDEQSL. 6 positions are modified to phosphoserine: Ser-344, Ser-347, Ser-381, Ser-383, Ser-397, and Ser-399. The helical transmembrane segment at 418–441 threads the bilayer; that stretch reads LGCIMAAFILCWIPYFIFFMVIAF. The important for agonist binding stretch occupies residues 425 to 429; that stretch reads FILCW. Residue Tyr-432 coordinates histamine. Cysteines 442 and 445 form a disulfide. Topologically, residues 442–447 are extracellular; sequence CNSCCS. The helical transmembrane segment at 448 to 470 threads the bilayer; it reads EPVHMFTIWLGYINSTLNPLIYP. The Cytoplasmic segment spans residues 471 to 488; that stretch reads LCNENFKKTFKKILHIRS.

Belongs to the G-protein coupled receptor 1 family. Phosphorylation at sites in the second and third cytoplasmic loops independently contribute to agonist-induced receptor down-regulation.

The protein resides in the cell membrane. Functionally, G-protein-coupled receptor for histamine, a biogenic amine that functions as an immune modulator and a neurotransmitter. Through the H1 receptor, histamine mediates the contraction of smooth muscles and increases capillary permeability due to contraction of terminal venules. Also mediates neurotransmission in the central nervous system and thereby regulates circadian rhythms, emotional and locomotor activities as well as cognitive functions. In Mus musculus (Mouse), this protein is Histamine H1 receptor.